The chain runs to 241 residues: tRNA (guanine-N(1)-)-methyltransferase (241 aa).

Residues glycine 123 and isoleucine 143–leucine 148 each bind S-adenosyl-L-methionine.

Belongs to the RNA methyltransferase TrmD family. As to quaternary structure, homodimer.

The protein localises to the cytoplasm. It carries out the reaction guanosine(37) in tRNA + S-adenosyl-L-methionine = N(1)-methylguanosine(37) in tRNA + S-adenosyl-L-homocysteine + H(+). In terms of biological role, specifically methylates guanosine-37 in various tRNAs. The polypeptide is tRNA (guanine-N(1)-)-methyltransferase (Roseobacter denitrificans (strain ATCC 33942 / OCh 114) (Erythrobacter sp. (strain OCh 114))).